Reading from the N-terminus, the 186-residue chain is ATP-dependent protease subunit HslV (186 aa).

The active site involves T14. A168, C171, and T174 together coordinate Na(+).

It belongs to the peptidase T1B family. HslV subfamily. A double ring-shaped homohexamer of HslV is capped on each side by a ring-shaped HslU homohexamer. The assembly of the HslU/HslV complex is dependent on binding of ATP.

The protein localises to the cytoplasm. The catalysed reaction is ATP-dependent cleavage of peptide bonds with broad specificity.. Its activity is regulated as follows. Allosterically activated by HslU binding. Protease subunit of a proteasome-like degradation complex believed to be a general protein degrading machinery. This Bradyrhizobium sp. (strain ORS 278) protein is ATP-dependent protease subunit HslV.